Here is a 238-residue protein sequence, read N- to C-terminus: MAISELKLPAGVGLQVWGSAAEQARGLAAEVAGRLRSALAEQGQALLVVSGGRSPVAFLEALSEEPLDWSRITVSLADERWVPESHADSNAGLVRRHLLRGEAAKARFIGLYQPAASLEEAAELADHHLHELPLPIDVLVLGMGDDGHTASLFPNSPGLDLAMDPQGTRRCLPMWAPSVPHQRLTLPRAVLAAAKVQLLAIQGQSKLATLNAALAVEDERRMPVRAFLRAPLTIHWYP.

This sequence belongs to the glucosamine/galactosamine-6-phosphate isomerase family. 6-phosphogluconolactonase subfamily.

The catalysed reaction is 6-phospho-D-glucono-1,5-lactone + H2O = 6-phospho-D-gluconate + H(+). The protein operates within carbohydrate degradation; pentose phosphate pathway; D-ribulose 5-phosphate from D-glucose 6-phosphate (oxidative stage): step 2/3. In terms of biological role, hydrolysis of 6-phosphogluconolactone to 6-phosphogluconate. The chain is 6-phosphogluconolactonase (pgl) from Pseudomonas aeruginosa (strain ATCC 15692 / DSM 22644 / CIP 104116 / JCM 14847 / LMG 12228 / 1C / PRS 101 / PAO1).